A 1167-amino-acid chain; its full sequence is C5a peptidase (1167 aa).

The first 31 residues, 1–31 (MRKKQKLPFDKLAIALMSTSILLNAQSDIKA), serve as a signal peptide directing secretion. Polar residues predominate over residues 34-52 (VTEDTPVTEQAVETPQPTA). Residues 34 to 73 (VTEDTPVTEQAVETPQPTAVSEEVPSSKETKTPQTPDDAE) form a disordered region. The Peptidase S8 domain occupies 99–581 (KATIRDLNDP…AGAVDAKKAS (483 aa)). Active-site charge relay system residues include Asp-130, His-193, and Ser-512. The tract at residues 1029-1133 (EGHSNKPEQD…RDQLPTTNDK (105 aa)) is disordered. 4 consecutive repeat copies span residues 1034-1050 (KPEQ…KPEA), 1051-1067 (KPEQ…KPEA), 1068-1084 (KPEQ…KPET), and 1085-1101 (KPEK…TPQK). The tract at residues 1034 to 1101 (KPEQDGSGQT…GQTPGKTPQK (68 aa)) is 4 X 17 AA tandem repeats. Basic and acidic residues-rich tracts occupy residues 1044-1071 (PDKK…KPEQ) and 1078-1090 (PDKK…EKDS). Polar residues-rich tracts occupy residues 1092–1106 (GQTP…QPSR) and 1120–1130 (KASTRDQLPTT). The short motif at 1127 to 1131 (LPTTN) is the LPXTG sorting signal element. The residue at position 1130 (Thr-1130) is a Pentaglycyl murein peptidoglycan amidated threonine. Residues 1131–1167 (NDKDTNRLHLLKLVMTTFFFGLVAHIFKTKRQKETKK) constitute a propeptide, removed by sortase.

This sequence belongs to the peptidase S8 family. Cleaved by SpeB protease; leading to its degradation. Degradation by SpeB is probably strictly regulated to preserve integrity of C5a peptidase.

It is found in the secreted. Its subcellular location is the cell wall. It catalyses the reaction The primary cleavage site is at 67-His-|-Lys-68 in human C5a with a minor secondary cleavage site at 58-Ala-|-Ser-59.. Functionally, this virulence factor of S.pyogenes specifically cleaves the human serum chemotaxin C5a at '68-Lys-|-Asp-69' bond near its C-terminus, destroying its ability to serve as a chemoattractant. In Streptococcus pyogenes, this protein is C5a peptidase (scpA).